An 85-amino-acid polypeptide reads, in one-letter code: ATP synthase subunit c (85 aa).

The next 2 helical transmembrane spans lie at Met1–Gly21 and Leu53–Ile73.

It belongs to the ATPase C chain family. In terms of assembly, F-type ATPases have 2 components, F(1) - the catalytic core - and F(0) - the membrane proton channel. F(1) has five subunits: alpha(3), beta(3), gamma(1), delta(1), epsilon(1). F(0) has three main subunits: a(1), b(2) and c(10-14). The alpha and beta chains form an alternating ring which encloses part of the gamma chain. F(1) is attached to F(0) by a central stalk formed by the gamma and epsilon chains, while a peripheral stalk is formed by the delta and b chains.

It localises to the cell inner membrane. Functionally, f(1)F(0) ATP synthase produces ATP from ADP in the presence of a proton or sodium gradient. F-type ATPases consist of two structural domains, F(1) containing the extramembraneous catalytic core and F(0) containing the membrane proton channel, linked together by a central stalk and a peripheral stalk. During catalysis, ATP synthesis in the catalytic domain of F(1) is coupled via a rotary mechanism of the central stalk subunits to proton translocation. Key component of the F(0) channel; it plays a direct role in translocation across the membrane. A homomeric c-ring of between 10-14 subunits forms the central stalk rotor element with the F(1) delta and epsilon subunits. This is ATP synthase subunit c from Dictyoglomus turgidum (strain DSM 6724 / Z-1310).